Consider the following 1129-residue polypeptide: PAN2-PAN3 deadenylation complex catalytic subunit PAN2 (1129 aa).

WD repeat units follow at residues 20 to 60 (PPAV…YTSY), 104 to 146 (PDFK…DTLP), 148 to 183 (DAQYTIMKRAGQYLCAATKTGGIHILDSNSLSVIKV), 186 to 226 (GHTG…FSLK), and 280 to 319 (LYDSYLAGFEMAPSGEAFALADSNSNVHLWGSPAKVHFPE). The interval 320-457 (YSNPTEFADH…DLHLDDVTRK (138 aa)) is linker. The tract at residues 396–427 (RTKRRNQIEVTRQTDRSSDSLTPPKFLSEKSR) is disordered. Residues 458–830 (DVPAMYGNVE…LPSVLTFQTK (373 aa)) enclose the USP domain. Residues 880–1052 (VAIDAEFIRL…IEDATTALKL (173 aa)) enclose the Exonuclease domain. The a divalent metal cation site is built by Asp-883, Glu-885, Asp-992, and Asp-1045. Residues 1083–1129 (APGSGNRNSMPAGMTATGAGRDTPEPMTTPKKGGAFGGVGFRSPMRR) form a disordered region.

It belongs to the peptidase C19 family. PAN2 subfamily. As to quaternary structure, forms a heterotrimer with an asymmetric homodimer of the regulatory subunit PAN3 to form the poly(A)-nuclease (PAN) deadenylation complex. A divalent metal cation is required as a cofactor.

It is found in the cytoplasm. The enzyme catalyses Exonucleolytic cleavage of poly(A) to 5'-AMP.. With respect to regulation, positively regulated by the regulatory subunit PAN3. Functionally, catalytic subunit of the poly(A)-nuclease (PAN) deadenylation complex, one of two cytoplasmic mRNA deadenylases involved in mRNA turnover. PAN specifically shortens poly(A) tails of RNA and the activity is stimulated by poly(A)-binding protein PAB1. PAN deadenylation is followed by rapid degradation of the shortened mRNA tails by the CCR4-NOT complex. Deadenylated mRNAs are then degraded by two alternative mechanisms, namely exosome-mediated 3'-5' exonucleolytic degradation, or deadenylation-dependent mRNA decaping and subsequent 5'-3' exonucleolytic degradation by XRN1. May also be involved in post-transcriptional maturation of mRNA poly(A) tails. In Phaeosphaeria nodorum (strain SN15 / ATCC MYA-4574 / FGSC 10173) (Glume blotch fungus), this protein is PAN2-PAN3 deadenylation complex catalytic subunit PAN2.